Reading from the N-terminus, the 583-residue chain is MRRHPQTATKHLFVSGGVASSLGKGLTASSLGQLLTARGLRVTMQKLDPYLNVDPGTMNPFQHGEVFVTEDGAETDLDVGHYERFLDRDLSGSANVTTGQVYSTVIAKERRGEYLGDTVQVIPHITDEIKRRIMAMAEPNADGRRPDVVITEIGGTVGDIESQPFLEAARQVRHDLGRENVFFLHVSLVPYLAPSGELKTKPTQHSVAALRSIGITPDALILRCDRDVPEALKNKIALMCDVDIDGIISTPAAPSIYDIPKVLHREELDAFVVRRLNLPFRDVDWTEWDDLLRRVHEPKETVRIALVGKYVELSDAYLSVIEAIRAGGFKHRAKVEISWVGSDDCQTDGGVASALGDVHGVLIPGGFGIRGIEGKISAISYARSRGLPVFGLCLGLQCIVIEAARSVGLTEANSAEFEPGTPDPVISTMADQEHIVSGQADLGGTMRLGAYPAVLESGSIVAEAYQSTKVSERHRHRYEVNNAYRERIAESGLRFSGTSPDGHLVEFVEYPPEQHPFVVGTQAHPELKSRPTRPHPLFAAFVKAAIDYKEGELLPVEMPERVSNGAERRDQVGQSIPEPANRG.

The tract at residues 1-278 (MRRHPQTATK…DAFVVRRLNL (278 aa)) is amidoligase domain. Residue S20 participates in CTP binding. S20 serves as a coordination point for UTP. ATP is bound by residues 21–26 (SLGKGL) and D78. 2 residues coordinate Mg(2+): D78 and E152. Residues 159-161 (DIE), 199-204 (KTKPTQ), and K235 contribute to the CTP site. UTP is bound by residues 199 to 204 (KTKPTQ) and K235. A Glutamine amidotransferase type-1 domain is found at 303–551 (RIALVGKYVE…VKAAIDYKEG (249 aa)). G366 serves as a coordination point for L-glutamine. C393 serves as the catalytic Nucleophile; for glutamine hydrolysis. L-glutamine is bound by residues 394–397 (LGLQ), E416, and R477. Catalysis depends on residues H524 and E526. Residues 559 to 583 (PERVSNGAERRDQVGQSIPEPANRG) form a disordered region.

Belongs to the CTP synthase family. As to quaternary structure, homotetramer.

The catalysed reaction is UTP + L-glutamine + ATP + H2O = CTP + L-glutamate + ADP + phosphate + 2 H(+). The enzyme catalyses L-glutamine + H2O = L-glutamate + NH4(+). It catalyses the reaction UTP + NH4(+) + ATP = CTP + ADP + phosphate + 2 H(+). Its pathway is pyrimidine metabolism; CTP biosynthesis via de novo pathway; CTP from UDP: step 2/2. With respect to regulation, allosterically activated by GTP, when glutamine is the substrate; GTP has no effect on the reaction when ammonia is the substrate. The allosteric effector GTP functions by stabilizing the protein conformation that binds the tetrahedral intermediate(s) formed during glutamine hydrolysis. Inhibited by the product CTP, via allosteric rather than competitive inhibition. Its function is as follows. Catalyzes the ATP-dependent amination of UTP to CTP with either L-glutamine or ammonia as the source of nitrogen. Regulates intracellular CTP levels through interactions with the four ribonucleotide triphosphates. In Mycobacterium ulcerans (strain Agy99), this protein is CTP synthase.